The chain runs to 370 residues: Aminomethyltransferase (370 aa).

It belongs to the GcvT family. In terms of assembly, the glycine cleavage system is composed of four proteins: P, T, L and H.

The catalysed reaction is N(6)-[(R)-S(8)-aminomethyldihydrolipoyl]-L-lysyl-[protein] + (6S)-5,6,7,8-tetrahydrofolate = N(6)-[(R)-dihydrolipoyl]-L-lysyl-[protein] + (6R)-5,10-methylene-5,6,7,8-tetrahydrofolate + NH4(+). The glycine cleavage system catalyzes the degradation of glycine. The polypeptide is Aminomethyltransferase (Prochlorococcus marinus (strain AS9601)).